The primary structure comprises 286 residues: Homoserine kinase (286 aa).

Proline 78–serine 88 contacts ATP.

It belongs to the GHMP kinase family. Homoserine kinase subfamily.

It localises to the cytoplasm. The catalysed reaction is L-homoserine + ATP = O-phospho-L-homoserine + ADP + H(+). It functions in the pathway amino-acid biosynthesis; L-threonine biosynthesis; L-threonine from L-aspartate: step 4/5. Its function is as follows. Catalyzes the ATP-dependent phosphorylation of L-homoserine to L-homoserine phosphate. In Limosilactobacillus fermentum (strain NBRC 3956 / LMG 18251) (Lactobacillus fermentum), this protein is Homoserine kinase.